Reading from the N-terminus, the 510-residue chain is NAD(P) transhydrogenase subunit alpha (510 aa).

Residues 1-401 (MRIGIPRERL…EEKCTCSPWR (401 aa)) lie on the Cytoplasmic side of the membrane. NAD(+) is bound by residues 120-122 (RIS), Val-175, 195-197 (DTR), Glu-238, and Leu-257. 2 helical membrane passes run 402–422 (KYAL…VAPK) and 423–443 (EFLG…YVVW). Over 444–452 (NVSHALHTP) the chain is Cytoplasmic. Residues 453-473 (LMSVTNAISGIIVVGALLQIG) traverse the membrane as a helical segment. The Periplasmic portion of the chain corresponds to 474-476 (QGG). A helical transmembrane segment spans residues 477–497 (WVSFLSFIAVLIASINIFGGF). Residues 498–510 (TVTQRMLKMFRKN) lie on the Cytoplasmic side of the membrane.

The protein belongs to the AlaDH/PNT family. In terms of assembly, heterodimer of an alpha (PntA) and a beta (PntB) chain. Alpha subunit serves as the dimerization unit.

The protein localises to the cell inner membrane. It catalyses the reaction NAD(+) + NADPH + H(+)(in) = NADH + NADP(+) + H(+)(out). In terms of biological role, the transhydrogenation between NADH and NADP is coupled to respiration and ATP hydrolysis and functions as a proton pump across the membrane. This Escherichia coli (strain K12) protein is NAD(P) transhydrogenase subunit alpha (pntA).